The following is a 488-amino-acid chain: Inosine-5'-monophosphate dehydrogenase (488 aa).

2 consecutive CBS domains span residues 93-149 and 153-214; these read VVTD…NQPV and MTPK…CKDE. Residues Asp-248 and 248–250 contribute to the NAD(+) site; that span reads DSS. Lys-267 is subject to N6-acetyllysine. Position 298–300 (298–300) interacts with NAD(+); sequence GIG. Positions 300 and 302 each coordinate K(+). An IMP-binding site is contributed by Ser-303. Cys-305 serves as a coordination point for K(+). The active-site Thioimidate intermediate is the Cys-305. IMP contacts are provided by residues 338-340, 361-362, and 385-389; these read DGG, GS, and YRGMG. The active-site Proton acceptor is the Arg-401. Glu-415 contributes to the IMP binding site. The residue at position 428 (Lys-428) is an N6-acetyllysine. K(+) is bound by residues Glu-469, Ser-470, and His-471.

Belongs to the IMPDH/GMPR family. As to quaternary structure, homotetramer. The cofactor is K(+).

The enzyme catalyses IMP + NAD(+) + H2O = XMP + NADH + H(+). It participates in purine metabolism; XMP biosynthesis via de novo pathway; XMP from IMP: step 1/1. Mycophenolic acid (MPA) is a non-competitive inhibitor that prevents formation of the closed enzyme conformation by binding to the same site as the amobile flap. In contrast, mizoribine monophosphate (MZP) is a competitive inhibitor that induces the closed conformation. MPA is a potent inhibitor of mammalian IMPDHs but a poor inhibitor of the bacterial enzymes. MZP is a more potent inhibitor of bacterial IMPDH. Its function is as follows. Catalyzes the conversion of inosine 5'-phosphate (IMP) to xanthosine 5'-phosphate (XMP), the first committed and rate-limiting step in the de novo synthesis of guanine nucleotides, and therefore plays an important role in the regulation of cell growth. This chain is Inosine-5'-monophosphate dehydrogenase, found in Escherichia coli O157:H7.